Consider the following 88-residue polypeptide: DNA-directed RNA polymerase subunit omega (88 aa).

It belongs to the RNA polymerase subunit omega family. In terms of assembly, the RNAP catalytic core consists of 2 alpha, 1 beta, 1 beta' and 1 omega subunit. When a sigma factor is associated with the core the holoenzyme is formed, which can initiate transcription.

It catalyses the reaction RNA(n) + a ribonucleoside 5'-triphosphate = RNA(n+1) + diphosphate. Promotes RNA polymerase assembly. Latches the N- and C-terminal regions of the beta' subunit thereby facilitating its interaction with the beta and alpha subunits. This Anaeromyxobacter sp. (strain Fw109-5) protein is DNA-directed RNA polymerase subunit omega.